A 456-amino-acid polypeptide reads, in one-letter code: Exodeoxyribonuclease 7 large subunit (456 aa).

This sequence belongs to the XseA family. In terms of assembly, heterooligomer composed of large and small subunits.

The protein resides in the cytoplasm. The enzyme catalyses Exonucleolytic cleavage in either 5'- to 3'- or 3'- to 5'-direction to yield nucleoside 5'-phosphates.. Its function is as follows. Bidirectionally degrades single-stranded DNA into large acid-insoluble oligonucleotides, which are then degraded further into small acid-soluble oligonucleotides. The polypeptide is Exodeoxyribonuclease 7 large subunit (Shigella flexneri serotype 5b (strain 8401)).